The primary structure comprises 130 residues: Small ribosomal subunit protein uS9 (130 aa).

It belongs to the universal ribosomal protein uS9 family.

In Haemophilus influenzae (strain 86-028NP), this protein is Small ribosomal subunit protein uS9.